The following is a 157-amino-acid chain: Protein Smg (157 aa).

This sequence belongs to the Smg family.

The protein is Protein Smg of Enterobacter sp. (strain 638).